Reading from the N-terminus, the 2473-residue chain is MGSIETEGNPPYFAREPIAIVGSSCRFPGGATSPSKLWELLEKPRDVLQEIPATRFNTKAFHHPDSQHHGSTNVKHAYLLDEDPRAFDRDFFSINPKEAEAMDPQQRLLLETVYEGIESTGHSMQQLRGSTTAVFVGCMSFDYHLTAIRGIDSLPQYHGTGTAASILANRVSYFYDWKGPSVTIDTACSSSLVALHQAVSALRNGEAEMAVAAGSNLIIGPEPFVSESKLNMLSPNGRSFMWDAAADGYTRGEGFAAVFLKTLSQAIADGDHIECIIRETGVNSDGKTPGITMPSSESQARLIRDTYARCGLNPARESDRPQYFEAHGTGTQAGDPIEARAIQSVFFPNEREGQLIVGSIKTVIGHTEGTAGIAGVLKASLAVQHGQIPANLHFKDLNPKIRPYYTNLRIPTETTPWPAVSKGYPRRVSVNSFGFGGTNAHAIIESWDGAGSLTNGYALNGNTLKPLGAGPFVLSANSGAALAANAGALADYLRAHPDADLRRLAYTLFRRTDFPFRAAFSATSVEQLAEKLEAGKDSLKSSSRTATIPEVLPPRILGIFTGQGAQWATMGKELYGASSVFRSAIDQMQRALNSLPIEDRPDWSLVDQLDAPAVDSRVGEAIVSQPLCTALQVALVDVLRAAGVELSAVVGHSSGEIGAAYAAGYLDATDAIRVAYYRGFHSHLAQGPGGKRGKMMAVGMSLNQATTFCSEFGGTLTVAASNSQTSCTLAGDAEAIEDAHARLQEKGTFARVLQVDTAYHSHHMKPCAIPYLESMKQCGVTVQKGGKQCRWYSSVWGSDGRSRSFNQADGLLLEGQYWVDNMTQPVLFSQALARALNEDQYFDLALEVGPHPALKGPSAETIKMLTGLSLPYSGVLKRGQNAVTSFSDALGLLWTSFPSSRPLITFDGVRRAFPSREPLKLAVLKGLPAYSWDHPGLIWKESRTSRIFRTQSQPRHELLGHSVTHGERDKREVHWKQLLRLNELPWLAGHRIQGEVLFPASGYLSMAYEAATRLVDDRQPLRLVELHDIDIVRAMRLEQDSSGLEVVFTVRVTAQSDDCITAEVACYSGAVDSVQPLDAPQTGLTAHFTGGVRLWLGEPSTDTLPSRKTPLLPMEALDMEQLYSNLAKEGFNYADLFQAKSMHRRLNRAVVTVSSPSEPSSMRECVHPAPVDTAFQGLLAGFSFPGDGRLGTIYLPTRVECVRVNMMPSESHATVLTADATVTSTGKTTLTGDVDLFDAANARTQVQIRGIHLSAVGQRRDPWLYAGTTWARDVSYGIEPSIKTKLSEADWVLYEQLSRTAYFYLRQLRKKILPQELMLMGKYRKHMMTWVLEHLLPRIEAGEHPEIRAEWKDDTLEMVQQWRASQPSDNNDMNILHAMGKNLVGIVRGTTPPLRVLTQDGMLDRLYVEGLGARDGNHDLAGFVKQLAHQYPRMRIAEVGAGTGGTTRAVLDALGNQYASYTYTDISTGFFENARTLFGQHSSKLSFKTLNIENDPVDQGFPEGTFDMVISSNCLHATRSLGETLRHCRQLLQPGGRLVLLEITRDFLPTQLVMSTLPGWFLGIEDGRVWAPTVSLERWDELLKANGFSGVEISSTPSFCSVIVAQAVDETVQLLREPLAVAPTALPPLGDILIVGGGVTSELASQIQKPLQAAAPSNTVTVLPGLEGIEVPKGAAVLCLSDLDSPVFRDMNSKRFRGLQNVMESAEVVLWVTSGAKSGNDPDANITLGLSSTLRAERMDLRLQFLDVDEPSSVDPSMLASMLLRLAFLDPSKNDELLWVQEPELALKEGALYVPRVVSLDTLNRRSAARHRQVTQLTSVGSEDVAVVVDERQGAFELQTIPFGGATKDEICLQVLASSIRTITCDEYGPVYVCIGRDLVSGDTALALSAVNSSVVKVSEDHILYRWQDDKTTAEYTAHLHLFLVRALAEHLLGSLKGPTWIHGAPHGLREVIDVVAREQSVAVFQTTSDMAMTSDVNFIHPYANKEDLQDFRPKGLQSFINLARQEHRALSAFIHASLPASAIVNKDVASLTASLILPELRILAKQNIHDGLQVPTESVEIVAIDKVSTVTSKELGPAVLIDWSTADTINALVRPLEHRGLFAPDKTYLLCGMTGDLGISVCLWMVENGARNVVLTSRNPNISPSVLNYLSHKGATVRPMAVDITNMDSLRSAYNDIKSSMPPVGGVMNAAMVLRDRLFHHLPWEDFAAVLGPKMVGSKNLDELFGNEQLDFFVCFSSTTSIVGSIGQSAYAAANHYMASLVQQRLQRGLAGSVIHIAILTGFGYIFRRDSEHAETIYKAILPRFDRQSETDLHEMLAEAIVCGRPGSAQPAELITGIRSVFQGEWRDDPRLSCYIGQQQLQDDSSGEQAAGSVSVKDQLASAEDPAECLVILESCFALSLGNLLEIDPEQLDHNMPVANLGIDSLVAIRIREWFLREMGVDMPVLKIMSDTYSMSRMCDDALVEWRRLNKS.

The Ketosynthase family 3 (KS3) domain maps to 15-446 (REPIAIVGSS…GTNAHAIIES (432 aa)). Active-site for beta-ketoacyl synthase activity residues include Cys-188, His-327, and His-366. The Malonyl-CoA:ACP transacylase (MAT) domain maps to 559 to 882 (IFTGQGAQWA…SGVLKRGQNA (324 aa)). Residues 956–1099 (HELLGHSVTH…GGVRLWLGEP (144 aa)) form an N-terminal hotdog fold region. Residues 956–1260 (HELLGHSVTH…IHLSAVGQRR (305 aa)) form a dehydratase (DH) domain region. Positions 956-1262 (HELLGHSVTH…LSAVGQRRDP (307 aa)) constitute a PKS/mFAS DH domain. His-990 (proton acceptor; for dehydratase activity) is an active-site residue. Positions 1114 to 1262 (MEALDMEQLY…LSAVGQRRDP (149 aa)) are C-terminal hotdog fold. Asp-1172 serves as the catalytic Proton donor; for dehydratase activity. Positions 1300 to 1606 (TAYFYLRQLR…PSFCSVIVAQ (307 aa)) are methyltransfrase (MT) domain. One can recognise a Ketoreductase (KR) domain in the interval 2108–2281 (TYLLCGMTGD…AGSVIHIAIL (174 aa)). The 86-residue stretch at 2388–2473 (AECLVILESC…LVEWRRLNKS (86 aa)) folds into the Carrier domain. Ser-2426 is modified (O-(pantetheine 4'-phosphoryl)serine).

It depends on pantetheine 4'-phosphate as a cofactor.

It functions in the pathway secondary metabolite biosynthesis. Reducing polyketide synthase; part of the gene cluster that mediates the biosynthesis of gregatin A, a fungal polyketide featuring an alkylated furanone core. The PKS grgA synthesizes C11 and C4 polyketide chains in the presence and absence of the trans-enoyl reductase grgB, respectively. The polyketide transferase grgF is then responsible for the fusion of the two carbon chains to produce the furanone skeleton of gregatin A. Next, the cytochrome P450 monooxygenase grgG accepts performs the oxidative cyclization to furnish the gregatin scaffold and leads to the formation of desmethylgregatin A. Finally, the O-methyltransferase grgD methylates the carboxyl group of desmethylgregatin A to provide gregatin A. In Penicillium sp, this protein is Reducing polyketide synthase grgA.